The chain runs to 643 residues: Fructose-1,6-bisphosphatase class 3 (643 aa).

This sequence belongs to the FBPase class 3 family. Mn(2+) is required as a cofactor.

The catalysed reaction is beta-D-fructose 1,6-bisphosphate + H2O = beta-D-fructose 6-phosphate + phosphate. It participates in carbohydrate biosynthesis; gluconeogenesis. The chain is Fructose-1,6-bisphosphatase class 3 from Streptococcus agalactiae serotype Ia (strain ATCC 27591 / A909 / CDC SS700).